The chain runs to 151 residues: 3-hydroxyacyl-[acyl-carrier-protein] dehydratase FabZ (151 aa).

His-56 is an active-site residue.

It belongs to the thioester dehydratase family. FabZ subfamily.

It localises to the cytoplasm. It carries out the reaction a (3R)-hydroxyacyl-[ACP] = a (2E)-enoyl-[ACP] + H2O. Its function is as follows. Involved in unsaturated fatty acids biosynthesis. Catalyzes the dehydration of short chain beta-hydroxyacyl-ACPs and long chain saturated and unsaturated beta-hydroxyacyl-ACPs. This Nitrobacter winogradskyi (strain ATCC 25391 / DSM 10237 / CIP 104748 / NCIMB 11846 / Nb-255) protein is 3-hydroxyacyl-[acyl-carrier-protein] dehydratase FabZ.